The following is a 413-amino-acid chain: Palmitoyltransferase ZDHHC6 (413 aa).

Topologically, residues 1-24 (MGIFCSVIKFENLQDLRRLCHWGP) are cytoplasmic. Residues 25–45 (IIALGVIAICSTMAMIDSVLW) traverse the membrane as a helical segment. Residues 46-57 (YWPLHTTGGSVN) are Lumenal-facing. Residues 58–78 (FIMLINWTVMILYNYFNAMFA) form a helical membrane-spanning segment. At 79-143 (GPGFVPRGWK…NCCGHQNHAS (65 aa)) the chain is on the cytoplasmic side. Residues 99-149 (QYCKVCQAYKAPRSHHCRKCNRCVMKMDHHCPWINNCCGHQNHASFTLFLL) form the DHHC domain. Cys129 serves as the catalytic S-palmitoyl cysteine intermediate. A helical transmembrane segment spans residues 144–164 (FTLFLLLAPLGCTHAAFIFVM). The Lumenal segment spans residues 165-194 (TMYTQLYNRLSFGWNTVKIDMSAARRDPPP). The helical transmembrane segment at 195–215 (IVPFGLAAFAATLFALGLALG) threads the bilayer. Residues 216–413 (TTIAVGMLFF…PAPEGEKKNR (198 aa)) lie on the Cytoplasmic side of the membrane. Residues 313–398 (VRSVRYKVIE…PRNCVEKCPC (86 aa)) enclose the SH3 domain. 3 S-palmitoyl cysteine lipidation sites follow: Cys328, Cys329, and Cys343. A Di-lysine motif motif is present at residues 410 to 413 (KKNR).

The protein belongs to the DHHC palmitoyltransferase family. As to quaternary structure, homooligomerizes. Interacts with SELENOK. Palmitoylated at 3 different sites by ZDHHC16. The combination of the different palmitoylation events strongly affects the quaternary assembly of ZDHHC6, its localization, stability and function. Palmitoylation at Cys-328 accelerates the turnover of ZDHHC6. Depalmitoylated by LYPLA2.

It localises to the endoplasmic reticulum membrane. It carries out the reaction L-cysteinyl-[protein] + hexadecanoyl-CoA = S-hexadecanoyl-L-cysteinyl-[protein] + CoA. It catalyses the reaction L-cysteinyl-[protein] + octadecanoyl-CoA = S-octadecanoyl-L-cysteinyl-[protein] + CoA. Functionally, endoplasmic reticulum palmitoyl acyltransferase that mediates palmitoylation of proteins such as AMFR, CALX, ITPR1 and TFRC. Palmitoylates calnexin (CALX), which is required for its association with the ribosome-translocon complex and efficient folding of glycosylated proteins. Mediates palmitoylation of AMFR, promoting AMFR distribution to the peripheral endoplasmic reticulum. Together with SELENOK, palmitoylates ITPR1 in immune cells, leading to regulate ITPR1 stability and function. Stearoyltransferase that mediates stearoylation of TFRC to inhibit TFRC-mediated activation of the JNK pathway and mitochondrial fragmentation. In Mus musculus (Mouse), this protein is Palmitoyltransferase ZDHHC6.